The chain runs to 446 residues: G patch domain-containing protein 4 (446 aa).

Met-1 carries the post-translational modification N-acetylmethionine. Thr-4 carries the post-translational modification Phosphothreonine. Residues Gly-11 to Ala-57 form the G-patch domain. Lys-46 participates in a covalent cross-link: Glycyl lysine isopeptide (Lys-Gly) (interchain with G-Cter in SUMO2). A Phosphothreonine modification is found at Thr-116. 2 disordered regions span residues Thr-116–Pro-140 and Gln-188–Asp-446. Residues Ser-128, Ser-130, and Ser-139 each carry the phosphoserine modification. A coiled-coil region spans residues Thr-166–Lys-251. The segment covering Ala-219–Ile-237 has biased composition (basic and acidic residues). Residues Arg-238–Gln-248 show a composition bias toward basic residues. Composition is skewed to basic and acidic residues over residues Glu-249–Ala-268, His-297–Ala-328, Arg-363–Ser-375, and Leu-392–Ala-409. 2 stretches are compositionally biased toward basic residues: residues Arg-416 to Lys-427 and Lys-437 to Asp-446.

The protein is G patch domain-containing protein 4 (GPATCH4) of Homo sapiens (Human).